Here is a 529-residue protein sequence, read N- to C-terminus: MSSGLIYISLEVLVACLITALVMYYVMKKIYYARGQATLKSASAKAKLMEFQAKSFVEAEEIRMKSQECKLQQQYENKNLQLQTHFDKKEAHLKHLEAQHKEFVRDEKRYLEKEKKELEKERQILEQEKENFKKQRAVCKESQAKALDAMLNYMAYTKDEIKSMILEQLEEELEAQKSALIRRYEKEAKEEGKKKSYAILAEATARFAGNYAAENLTTRIALPCSDYIGRVIGKDGKNIEAFKKVSGVDIEFSEDSSELCLSSFNLYRREVASETLKILIEDGRIQPNRIEEVYHRVARNLEKELLSEGESVVLELELGAMEDELKILIGKMRYRSSFGQNALQHSKEVALLAGLIAEQLGGDKKLARRAGILHDIGKALTQELGRDHVNLGVEVCKRHKEDPVVINAIYAHHGHEEILSVECASVCAADALSAGRPGARRKSDEEYAKRMQALEEIALEFDGVEKAYAMESGRELRVIVKSNQVRDNQVPIIARKIAKKIEESAQYVGEVGVQVVRESRFKTTATLKQ.

A helical membrane pass occupies residues 4 to 24 (GLIYISLEVLVACLITALVMY). The KH domain maps to 216–297 (LTTRIALPCS…NRIEEVYHRV (82 aa)). The region spanning 342 to 435 (ALQHSKEVAL…VCAADALSAG (94 aa)) is the HD domain.

The protein belongs to the RNase Y family.

The protein localises to the cell membrane. Functionally, endoribonuclease that initiates mRNA decay. This chain is Ribonuclease Y, found in Helicobacter pylori (strain ATCC 700392 / 26695) (Campylobacter pylori).